Here is a 183-residue protein sequence, read N- to C-terminus: Nucleoside triphosphate pyrophosphatase (183 aa).

The active-site Proton acceptor is the Asp71.

Belongs to the Maf family. A divalent metal cation is required as a cofactor.

It is found in the cytoplasm. It carries out the reaction a ribonucleoside 5'-triphosphate + H2O = a ribonucleoside 5'-phosphate + diphosphate + H(+). The catalysed reaction is a 2'-deoxyribonucleoside 5'-triphosphate + H2O = a 2'-deoxyribonucleoside 5'-phosphate + diphosphate + H(+). In terms of biological role, nucleoside triphosphate pyrophosphatase. May have a dual role in cell division arrest and in preventing the incorporation of modified nucleotides into cellular nucleic acids. The polypeptide is Nucleoside triphosphate pyrophosphatase (Campylobacter jejuni subsp. jejuni serotype O:6 (strain 81116 / NCTC 11828)).